The primary structure comprises 671 residues: MESIEQQLTELRTTLRHHEYLYHVMDAPEIPDAEYDRLMRELRELETKHPELITPDSPTQRVGAAPLAAFSQIRHEVPMLSLDNVFDEESFLAFNKRVQDRLKNNEKVTWCCELKLDGLAVSILYENGVLVSAATRGDGTTGEDITSNVRTIRAIPLKLHGENIPARLEVRGEVFLPQAGFEKINEDARRTGGKVFANPRNAAAGSLRQLDPRITAKRPLTFFCYGVGVLEGGELPDTHLGRLLQFKKWGLPVSDRVTLCESAEEVLAFYHKVEEDRPTLGFDIDGVVIKVNSLEQQEQLGFVARAPRWAVAFKFPAQEQMTFVRDVEFQVGRTGAITPVARLEPVHVAGVLVSNATLHNADEIERLGLRIGDKVVIRRAGDVIPQVVNVVLSERPEDTREVVFPTHCPVCGSDVERVEGEAVARCTGGLICGAQRKESLKHFVSRRAMDVDGMGDKIIDQLVEKEYVHTPADLFKLTAGKLTGLERMGPKSAQNVVNALEKAKETTFARFLYALGIREVGEATAAGLAAYFGTLEVLEAASIEELQKVPDVGIVVASHVHNFFAEESNRNVISELLAEGVHWPAPIVINAEEIDSPFAGKTVVLTGSLSQMSRDDAKARLVELGAKVAGSVSKKTDLVIAGEAAGSKLAKAQELGIEVIDEAEMLRLLGS.

NAD(+) is bound by residues 32–36 (DAEYD), 81–82 (SL), and E113. K115 serves as the catalytic N6-AMP-lysine intermediate. R136, E173, K290, and K314 together coordinate NAD(+). Zn(2+) contacts are provided by C408, C411, C426, and C432. The BRCT domain occupies 593–671 (EIDSPFAGKT…EAEMLRLLGS (79 aa)).

This sequence belongs to the NAD-dependent DNA ligase family. LigA subfamily. It depends on Mg(2+) as a cofactor. Mn(2+) is required as a cofactor.

The enzyme catalyses NAD(+) + (deoxyribonucleotide)n-3'-hydroxyl + 5'-phospho-(deoxyribonucleotide)m = (deoxyribonucleotide)n+m + AMP + beta-nicotinamide D-nucleotide.. DNA ligase that catalyzes the formation of phosphodiester linkages between 5'-phosphoryl and 3'-hydroxyl groups in double-stranded DNA using NAD as a coenzyme and as the energy source for the reaction. It is essential for DNA replication and repair of damaged DNA. The protein is DNA ligase of Shigella sonnei (strain Ss046).